We begin with the raw amino-acid sequence, 561 residues long: Putative transport protein YbjL (561 aa).

Helical transmembrane passes span 8–28, 32–52, 66–86, 94–114, and 158–178; these read LLNG…LCLG, LGSI…LLGQ, FMLF…SIFF, MLAL…GKLF, and NLSL…IVGA. RCK C-terminal domains are found at residues 200-288 and 292-373; these read RGLD…SFRN and VFDR…RIGF. 5 helical membrane-spanning segments follow: residues 383–403, 406–426, 451–471, 475–495, and 540–560; these read LLAF…TFQF, FSFG…LGFM, VFMA…LGAI, MLIA…LFGA, and AIAN…WPGL.

The protein belongs to the AAE transporter (TC 2.A.81) family. YbjL subfamily.

The protein localises to the cell membrane. The chain is Putative transport protein YbjL from Shigella flexneri.